A 138-amino-acid chain; its full sequence is Histone H2B.3 (138 aa).

Composition is skewed to basic and acidic residues over residues 1–18 (MAPK…EKTT) and 26–38 (EKRP…GGDK). A disordered region spans residues 1 to 46 (MAPKAEKKPVAEKAEKTTAAKKTKAEKRPPASKEGGDKKGKKKSKK). N6-acetyllysine is present on residues K7 and K27. Residue K134 forms a Glycyl lysine isopeptide (Lys-Gly) (interchain with G-Cter in ubiquitin) linkage.

This sequence belongs to the histone H2B family. In terms of assembly, the nucleosome is a histone octamer containing two molecules each of H2A, H2B, H3 and H4 assembled in one H3-H4 heterotetramer and two H2A-H2B heterodimers. The octamer wraps approximately 147 bp of DNA. Post-translationally, can be acetylated to form H2BK6ac and H2BK33ac. Monoubiquitinated to form H2BK143ub1; may give a specific tag for epigenetic transcriptional activation.

It localises to the nucleus. The protein resides in the chromosome. Its function is as follows. Core component of nucleosome. Nucleosomes wrap and compact DNA into chromatin, limiting DNA accessibility to the cellular machineries which require DNA as a template. Histones thereby play a central role in transcription regulation, DNA repair, DNA replication and chromosomal stability. DNA accessibility is regulated via a complex set of post-translational modifications of histones, also called histone code, and nucleosome remodeling. The chain is Histone H2B.3 from Triticum aestivum (Wheat).